Reading from the N-terminus, the 310-residue chain is tRNA uridine(34) hydroxylase (310 aa).

In terms of domain architecture, Rhodanese spans 134 to 232; the sequence is DDPDTLLIDT…YFEEVSQTES (99 aa). Cysteine 192 (cysteine persulfide intermediate) is an active-site residue.

It belongs to the TrhO family.

The enzyme catalyses uridine(34) in tRNA + AH2 + O2 = 5-hydroxyuridine(34) in tRNA + A + H2O. Functionally, catalyzes oxygen-dependent 5-hydroxyuridine (ho5U) modification at position 34 in tRNAs. This Prochlorococcus marinus (strain MIT 9313) protein is tRNA uridine(34) hydroxylase.